A 49-amino-acid polypeptide reads, in one-letter code: Large ribosomal subunit protein bL33B (49 aa).

The protein belongs to the bacterial ribosomal protein bL33 family.

This is Large ribosomal subunit protein bL33B from Lacticaseibacillus paracasei (strain ATCC 334 / BCRC 17002 / CCUG 31169 / CIP 107868 / KCTC 3260 / NRRL B-441) (Lactobacillus paracasei).